Consider the following 181-residue polypeptide: MYEYLDRRYALALYKIAEEKGKVEEYLEELKDVTDIINNDTQFLEFIEHPEISTAEKKKTFINVFKGKISEDILSFLLILIDKGRINQLYSKLKEMGKIYLENHNTVIATVKTVIPLEDDERETLTEKLRRKFNKEVLIKEELDPEIIGGVYVEVNNMVIDGTVKSKLSEMKKIMLKGEQR.

It belongs to the ATPase delta chain family. F-type ATPases have 2 components, F(1) - the catalytic core - and F(0) - the membrane proton channel. F(1) has five subunits: alpha(3), beta(3), gamma(1), delta(1), epsilon(1). F(0) has three main subunits: a(1), b(2) and c(10-14). The alpha and beta chains form an alternating ring which encloses part of the gamma chain. F(1) is attached to F(0) by a central stalk formed by the gamma and epsilon chains, while a peripheral stalk is formed by the delta and b chains.

It is found in the cell membrane. Functionally, f(1)F(0) ATP synthase produces ATP from ADP in the presence of a proton or sodium gradient. F-type ATPases consist of two structural domains, F(1) containing the extramembraneous catalytic core and F(0) containing the membrane proton channel, linked together by a central stalk and a peripheral stalk. During catalysis, ATP synthesis in the catalytic domain of F(1) is coupled via a rotary mechanism of the central stalk subunits to proton translocation. In terms of biological role, this protein is part of the stalk that links CF(0) to CF(1). It either transmits conformational changes from CF(0) to CF(1) or is implicated in proton conduction. The sequence is that of ATP synthase subunit delta from Clostridium kluyveri (strain NBRC 12016).